Here is a 448-residue protein sequence, read N- to C-terminus: Acyl-lipid (9-3)-desaturase (448 aa).

A Cytochrome b5 heme-binding domain is found at 6-90; the sequence is KKYITSDELK…LKDYSVSEVS (85 aa). Heme contacts are provided by histidine 41 and histidine 64. 2 consecutive transmembrane segments (helical) span residues 112-132 and 137-157; these read IMFA…YGVL and VLVH…SGWI. The short motif at 159–163 is the Histidine box-1 element; sequence HDAGH. The helical transmembrane segment at 172 to 192 threads the bilayer; the sequence is LNKFMGIFAANCLSGISIGWW. The Histidine box-2 motif lies at 196 to 200; that stretch reads HNAHH. Helical transmembrane passes span 212-232, 254-274, and 286-306; these read LQYI…TSHF, FYPI…IMLL, and LLGC…LPNW. The Histidine box-3 motif lies at 373 to 377; the sequence is QIEHH.

It belongs to the fatty acid desaturase type 1 family.

The protein localises to the endoplasmic reticulum membrane. The enzyme catalyses (9Z,12Z,15Z)-octadecatrienoyl-containing glycerolipid + 2 Fe(II)-[cytochrome b5] + O2 + 2 H(+) = (6Z,9Z,12Z,15Z)-octadecatetraenoyl-containing glycerolipid + 2 Fe(III)-[cytochrome b5] + 2 H2O. It carries out the reaction a (9Z,12Z)-octadecadienoyl-containing glycerolipid + 2 Fe(II)-[cytochrome b5] + O2 + 2 H(+) = (6Z,9Z,12Z)-octadecatrienoyl-containing glycerolipid + 2 Fe(III)-[cytochrome b5] + 2 H2O. It participates in lipid metabolism; polyunsaturated fatty acid biosynthesis. Its function is as follows. Fatty acid desaturase able to introduce a delta(6)-double bond into delta(9)-unsaturated fatty-acid substrates. Can use both linoleic acid (18:2(9Z,12Z)) and alpha-linolenic acid (18:3(9Z,12Z,15Z)) as substrates. This is Acyl-lipid (9-3)-desaturase from Borago officinalis (Bourrache).